Here is a 59-residue protein sequence, read N- to C-terminus: Metallothionein-1B (59 aa).

The segment at 1-29 (MPGPCCNDKCVCQEGGCKAGCQCTSCRCS) is beta. A divalent metal cation contacts are provided by cysteine 5, cysteine 6, cysteine 10, cysteine 17, cysteine 21, cysteine 23, cysteine 26, cysteine 28, cysteine 31, cysteine 34, cysteine 38, cysteine 40, cysteine 46, cysteine 50, cysteine 54, cysteine 56, and cysteine 57. The tract at residues 30–59 (PCQKCTSGCKCATKEECSKTCTKPCSCCPK) is alpha.

Belongs to the metallothionein superfamily. Type 3 family.

In terms of biological role, binds six divalent metal ions. Known to bind copper and cadmium. The polypeptide is Metallothionein-1B (Callinectes sapidus (Blue crab)).